The chain runs to 308 residues: MIIVTGGAGFIGSNIVKSLNDLGRKDILVVDNLKDGTKFINLVDLDIADYCDKEDFIAQIIAGDDFGDIDAVFHEGACSATTEWDGKYIMHNNYEYSKELLHYCLDREIPFFYASSAATYGDKTEFVEERQFEGPLNVYGYSKFLFDQYVREILPNASSPVCGFKYFNVYGPREQHKGSMSSVAFHLNNQILKGENPKLFAGSEHFLRDFVYVGDVAAVNIWAWQNKISGIFNCGTGHAESFKAVAEAVIKHHGKGAIETIPFPDHLKSRYQEYTQADLTKLRAAGCNLKFKSVAEGVAEYMAWLNRK.

NADP(+) is bound by residues 10–11 (FI), 31–32 (DN), lysine 38, lysine 53, 75–79 (EGACS), and asparagine 92. The Proton acceptor role is filled by tyrosine 139. NADP(+) is bound at residue lysine 143. Asparagine 168 is a binding site for substrate. The NADP(+) site is built by valine 169 and lysine 177. Catalysis depends on lysine 177, which acts as the Proton acceptor. Substrate-binding positions include serine 179, histidine 186, 200–203 (FAGS), arginine 208, and tyrosine 271.

Belongs to the NAD(P)-dependent epimerase/dehydratase family. HldD subfamily. As to quaternary structure, homopentamer. It depends on NADP(+) as a cofactor.

It carries out the reaction ADP-D-glycero-beta-D-manno-heptose = ADP-L-glycero-beta-D-manno-heptose. The protein operates within nucleotide-sugar biosynthesis; ADP-L-glycero-beta-D-manno-heptose biosynthesis; ADP-L-glycero-beta-D-manno-heptose from D-glycero-beta-D-manno-heptose 7-phosphate: step 4/4. Its function is as follows. Catalyzes the interconversion between ADP-D-glycero-beta-D-manno-heptose and ADP-L-glycero-beta-D-manno-heptose via an epimerization at carbon 6 of the heptose. The sequence is that of ADP-L-glycero-D-manno-heptose-6-epimerase from Actinobacillus succinogenes (strain ATCC 55618 / DSM 22257 / CCUG 43843 / 130Z).